A 264-amino-acid polypeptide reads, in one-letter code: Thiazole synthase (264 aa).

Catalysis depends on Lys-106, which acts as the Schiff-base intermediate with DXP. 1-deoxy-D-xylulose 5-phosphate contacts are provided by residues Gly-167, 193 to 194 (AG), and 215 to 216 (NS).

This sequence belongs to the ThiG family. In terms of assembly, homotetramer. Forms heterodimers with either ThiH or ThiS.

The protein resides in the cytoplasm. The catalysed reaction is [ThiS sulfur-carrier protein]-C-terminal-Gly-aminoethanethioate + 2-iminoacetate + 1-deoxy-D-xylulose 5-phosphate = [ThiS sulfur-carrier protein]-C-terminal Gly-Gly + 2-[(2R,5Z)-2-carboxy-4-methylthiazol-5(2H)-ylidene]ethyl phosphate + 2 H2O + H(+). It functions in the pathway cofactor biosynthesis; thiamine diphosphate biosynthesis. In terms of biological role, catalyzes the rearrangement of 1-deoxy-D-xylulose 5-phosphate (DXP) to produce the thiazole phosphate moiety of thiamine. Sulfur is provided by the thiocarboxylate moiety of the carrier protein ThiS. In vitro, sulfur can be provided by H(2)S. This is Thiazole synthase from Pseudomonas putida (strain W619).